The chain runs to 349 residues: Protein-glutamate methylesterase/protein-glutamine glutaminase 1 (349 aa).

The 116-residue stretch at 4–119 folds into the Response regulatory domain; the sequence is RILVVDDSAV…KGFLEDSARR (116 aa). Asp53 is subject to 4-aspartylphosphate. The 191-residue stretch at 159–349 folds into the CheB-type methylesterase domain; sequence PRAGRAELVV…VASAVLAWAR (191 aa). Residues Ser172, His198, and Asp293 contribute to the active site.

It belongs to the CheB family. Post-translationally, phosphorylated by CheA. Phosphorylation of the N-terminal regulatory domain activates the methylesterase activity.

Its subcellular location is the cytoplasm. The catalysed reaction is [protein]-L-glutamate 5-O-methyl ester + H2O = L-glutamyl-[protein] + methanol + H(+). It catalyses the reaction L-glutaminyl-[protein] + H2O = L-glutamyl-[protein] + NH4(+). Involved in chemotaxis. Part of a chemotaxis signal transduction system that modulates chemotaxis in response to various stimuli. Catalyzes the demethylation of specific methylglutamate residues introduced into the chemoreceptors (methyl-accepting chemotaxis proteins or MCP) by CheR. Also mediates the irreversible deamidation of specific glutamine residues to glutamic acid. In Anaeromyxobacter dehalogenans (strain 2CP-C), this protein is Protein-glutamate methylesterase/protein-glutamine glutaminase 1.